The sequence spans 63 residues: Large ribosomal subunit protein uL29 (63 aa).

Belongs to the universal ribosomal protein uL29 family.

The protein is Large ribosomal subunit protein uL29 of Idiomarina loihiensis (strain ATCC BAA-735 / DSM 15497 / L2-TR).